Consider the following 952-residue polypeptide: Glycine dehydrogenase (decarboxylating) (952 aa).

K703 is subject to N6-(pyridoxal phosphate)lysine.

This sequence belongs to the GcvP family. In terms of assembly, the glycine cleavage system is composed of four proteins: P, T, L and H. The cofactor is pyridoxal 5'-phosphate.

The enzyme catalyses N(6)-[(R)-lipoyl]-L-lysyl-[glycine-cleavage complex H protein] + glycine + H(+) = N(6)-[(R)-S(8)-aminomethyldihydrolipoyl]-L-lysyl-[glycine-cleavage complex H protein] + CO2. Functionally, the glycine cleavage system catalyzes the degradation of glycine. The P protein binds the alpha-amino group of glycine through its pyridoxal phosphate cofactor; CO(2) is released and the remaining methylamine moiety is then transferred to the lipoamide cofactor of the H protein. In Mycolicibacterium gilvum (strain PYR-GCK) (Mycobacterium gilvum (strain PYR-GCK)), this protein is Glycine dehydrogenase (decarboxylating).